Here is a 256-residue protein sequence, read N- to C-terminus: 5-keto-4-deoxy-D-glucarate aldolase (256 aa).

His-50 serves as the catalytic Proton acceptor. Position 151 (Gln-151) interacts with substrate. Position 153 (Glu-153) interacts with Mg(2+). Substrate contacts are provided by Ser-178 and Asp-179. Asp-179 is a Mg(2+) binding site.

It belongs to the HpcH/HpaI aldolase family. KDGluc aldolase subfamily. Homohexamer; trimer of dimers. Mg(2+) serves as cofactor.

It carries out the reaction 5-dehydro-4-deoxy-D-glucarate = 2-hydroxy-3-oxopropanoate + pyruvate. The enzyme catalyses 2-dehydro-3-deoxy-D-glucarate = 2-hydroxy-3-oxopropanoate + pyruvate. Its pathway is carbohydrate acid metabolism; galactarate degradation; D-glycerate from galactarate: step 2/3. Catalyzes the reversible retro-aldol cleavage of both 5-keto-4-deoxy-D-glucarate and 2-keto-3-deoxy-D-glucarate to pyruvate and tartronic semialdehyde. The sequence is that of 5-keto-4-deoxy-D-glucarate aldolase from Escherichia coli O157:H7 (strain EC4115 / EHEC).